Reading from the N-terminus, the 239-residue chain is Probable transcriptional regulatory protein VC_A0006 (239 aa).

The protein belongs to the TACO1 family.

It localises to the cytoplasm. The protein is Probable transcriptional regulatory protein VC_A0006 of Vibrio cholerae serotype O1 (strain ATCC 39315 / El Tor Inaba N16961).